The sequence spans 63 residues: Large ribosomal subunit protein bL35 (63 aa).

The protein belongs to the bacterial ribosomal protein bL35 family.

The chain is Large ribosomal subunit protein bL35 from Campylobacter concisus (strain 13826).